Here is a 395-residue protein sequence, read N- to C-terminus: Probable peptidoglycan glycosyltransferase FtsW (395 aa).

The Cytoplasmic segment spans residues 1 to 24 (MADLAAGVAERGPRLSLWSSLDQR). Residues 25–45 (LVWVVAATALLGLVMVASASI) traverse the membrane as a helical segment. Residues 46–62 (SMAEQATGDPFYFFKRQ) lie on the Periplasmic side of the membrane. The chain crosses the membrane as a helical span at residues 63-83 (IFFALLGLGMALALLQIPLAT). Over 84 to 86 (WER) the chain is Cytoplasmic. A helical transmembrane segment spans residues 87–107 (AGPGLLLGALALLVLVLIPGV). Residues 108-116 (GREVNGAVR) lie on the Periplasmic side of the membrane. Residues 117 to 137 (WIPLGVFNLQVAEVVKVLLAL) traverse the membrane as a helical segment. Topologically, residues 138-152 (YLAGFLVRRQQQLRT) are cytoplasmic. Residues 153–173 (SMAAFLVPVLVSAACAFLLLL) form a helical membrane-spanning segment. Residues 174 to 178 (QPDFG) lie on the Periplasmic side of the membrane. Residues 179-199 (TALMLMALAVGLLYLAGAPLW) traverse the membrane as a helical segment. A topological domain (cytoplasmic) is located at residue arginine 200. A helical membrane pass occupies residues 201–221 (FAALVGVLAAAAAALVVYSPY). Residues 222-276 (RWQRVTAFMDPWSDPFNTGFQLTQSLIAIGRGDWLGVGLGGSVQKLFYLPEAHTD) lie on the Periplasmic side of the membrane. Residues 277-297 (FVFSVLAEELGWLGVLAVVLL) form a helical membrane-spanning segment. Topologically, residues 298–316 (FSYIVWRAMAVGWQCHRHR) are cytoplasmic. The chain crosses the membrane as a helical span at residues 317-337 (LPFAGYLAWAVGLALGLQAFI). Residues 338–352 (NMGVATGLLPTKGLT) are Periplasmic-facing. A helical transmembrane segment spans residues 353 to 373 (LPLFSYGGSSALATGAMVGLL). Residues 374-395 (LRCGYELAQARAEGRRPEEAAS) are Cytoplasmic-facing.

It belongs to the SEDS family. FtsW subfamily.

The protein localises to the cell inner membrane. The catalysed reaction is [GlcNAc-(1-&gt;4)-Mur2Ac(oyl-L-Ala-gamma-D-Glu-L-Lys-D-Ala-D-Ala)](n)-di-trans,octa-cis-undecaprenyl diphosphate + beta-D-GlcNAc-(1-&gt;4)-Mur2Ac(oyl-L-Ala-gamma-D-Glu-L-Lys-D-Ala-D-Ala)-di-trans,octa-cis-undecaprenyl diphosphate = [GlcNAc-(1-&gt;4)-Mur2Ac(oyl-L-Ala-gamma-D-Glu-L-Lys-D-Ala-D-Ala)](n+1)-di-trans,octa-cis-undecaprenyl diphosphate + di-trans,octa-cis-undecaprenyl diphosphate + H(+). The protein operates within cell wall biogenesis; peptidoglycan biosynthesis. Its function is as follows. Peptidoglycan polymerase that is essential for cell division. The polypeptide is Probable peptidoglycan glycosyltransferase FtsW (Halorhodospira halophila (strain DSM 244 / SL1) (Ectothiorhodospira halophila (strain DSM 244 / SL1))).